We begin with the raw amino-acid sequence, 285 residues long: Protein phosphatase 1 regulatory subunit 3C (285 aa).

A PP1-binding motif motif is present at residues 72-75; that stretch reads KVVF. Positions 133-241 constitute a CBM21 domain; sequence RKRLMKNSVC…NNNGKNYALV (109 aa).

As to quaternary structure, interacts with PPP1CC catalytic subunit of PP1 and associates with glycogen. Forms complexes with glycogen phosphorylase, glycogen synthase and phosphorylase kinase which is necessary for its regulation of PP1 activity. In terms of tissue distribution, ubiquitously expressed in the examined tissues including brain, muscle, liver and spleen under normoxic condition. Its expression is higher in insulin sensitive tissues (liver and muscle) than in the brain and spleen. Significantly increased expression in the liver and muscle under short-term (1-12 hours) hypoxia exposure. Significantly increased expression after long-term (natural) hypoxia exposure in liver and spleen. No significant differences in expression in brain for any time periods.

In terms of biological role, acts as a glycogen-targeting subunit for PP1 and regulates its activity. Activates glycogen synthase, reduces glycogen phosphorylase activity and limits glycogen breakdown. The chain is Protein phosphatase 1 regulatory subunit 3C from Clarias batrachus (Walking catfish).